The chain runs to 288 residues: Quinate/shikimate dehydrogenase (288 aa).

Positions 71 and 107 each coordinate substrate. NAD(+)-binding positions include 132-135, 155-158, K205, 232-235, and G255; these read AGGA, NRRD, and CVYN.

Belongs to the shikimate dehydrogenase family. In terms of assembly, homodimer.

The catalysed reaction is L-quinate + NAD(+) = 3-dehydroquinate + NADH + H(+). It catalyses the reaction L-quinate + NADP(+) = 3-dehydroquinate + NADPH + H(+). The enzyme catalyses shikimate + NADP(+) = 3-dehydroshikimate + NADPH + H(+). It carries out the reaction shikimate + NAD(+) = 3-dehydroshikimate + NADH + H(+). Its pathway is metabolic intermediate biosynthesis; chorismate biosynthesis; chorismate from D-erythrose 4-phosphate and phosphoenolpyruvate: step 4/7. Functionally, the actual biological function of YdiB remains unclear, nor is it known whether 3-dehydroshikimate or quinate represents the natural substrate. Catalyzes the reversible NAD-dependent reduction of both 3-dehydroshikimate (DHSA) and 3-dehydroquinate to yield shikimate (SA) and quinate, respectively. It can use both NAD or NADP for catalysis, however it has higher catalytic efficiency with NAD. This Escherichia coli O139:H28 (strain E24377A / ETEC) protein is Quinate/shikimate dehydrogenase.